We begin with the raw amino-acid sequence, 258 residues long: Thymidylate synthase (258 aa).

Residue arginine 21 coordinates dUMP. Histidine 51 contributes to the (6R)-5,10-methylene-5,6,7,8-tetrahydrofolate binding site. Residue 121 to 122 coordinates dUMP; it reads RR. Catalysis depends on cysteine 141, which acts as the Nucleophile. Residues 161 to 164, asparagine 172, and 202 to 204 each bind dUMP; these read RSAD and HLY. Aspartate 164 provides a ligand contact to (6R)-5,10-methylene-5,6,7,8-tetrahydrofolate. Position 257 (alanine 257) interacts with (6R)-5,10-methylene-5,6,7,8-tetrahydrofolate.

It belongs to the thymidylate synthase family. Bacterial-type ThyA subfamily. Homodimer.

The protein resides in the cytoplasm. The enzyme catalyses dUMP + (6R)-5,10-methylene-5,6,7,8-tetrahydrofolate = 7,8-dihydrofolate + dTMP. It functions in the pathway pyrimidine metabolism; dTTP biosynthesis. Functionally, catalyzes the reductive methylation of 2'-deoxyuridine-5'-monophosphate (dUMP) to 2'-deoxythymidine-5'-monophosphate (dTMP) while utilizing 5,10-methylenetetrahydrofolate (mTHF) as the methyl donor and reductant in the reaction, yielding dihydrofolate (DHF) as a by-product. This enzymatic reaction provides an intracellular de novo source of dTMP, an essential precursor for DNA biosynthesis. The polypeptide is Thymidylate synthase (Dichelobacter nodosus (strain VCS1703A)).